Here is a 457-residue protein sequence, read N- to C-terminus: Argininosuccinate lyase (457 aa).

It belongs to the lyase 1 family. Argininosuccinate lyase subfamily.

It is found in the cytoplasm. It carries out the reaction 2-(N(omega)-L-arginino)succinate = fumarate + L-arginine. The protein operates within amino-acid biosynthesis; L-arginine biosynthesis; L-arginine from L-ornithine and carbamoyl phosphate: step 3/3. This chain is Argininosuccinate lyase, found in Pectobacterium carotovorum subsp. carotovorum (strain PC1).